The following is a 273-amino-acid chain: uncharacterized protein (273 aa).

This is an uncharacterized protein from Mycobacterium bovis (strain ATCC BAA-935 / AF2122/97).